We begin with the raw amino-acid sequence, 517 residues long: Cell division cycle protein 73 (517 aa).

The span at 124–135 (SEPEAKKPRLDG) shows a compositional bias: basic and acidic residues. 2 disordered regions span residues 124–159 (SEPE…SAAK) and 306–326 (GHHA…LAKP). Residues 315-324 (DAPPGRPPLA) show a composition bias toward pro residues.

This sequence belongs to the CDC73 family. In terms of assembly, component of the PAF1 complex which consists of at least cdc-73, ctr-9, leo-1, pafo-1 and rtfo-1.

The protein localises to the nucleus. Functionally, component of the PAF1 complex which is a multifunctional complex involved in transcription initiation via genetic interactions with TATA-binding proteins, elongation and transcription-coupled histone modification. This Caenorhabditis elegans protein is Cell division cycle protein 73.